A 464-amino-acid chain; its full sequence is L-cysteine desulfhydrase-like protein lolT2 (464 aa).

K227 carries the post-translational modification N6-(pyridoxal phosphate)lysine.

It belongs to the class-V pyridoxal-phosphate-dependent aminotransferase family. Pyridoxal 5'-phosphate serves as cofactor.

It participates in alkaloid biosynthesis. Functionally, L-cysteine desulfhydrase-like protein; part of the gene cluster that mediates the biosynthesis of loline alkaloids, potent insecticidal agents composed of a pyrrolizidine ring system and an uncommon ether bridge linking carbons 2 and 7. Lolines are structurally differentiated by the various modifications of the L-amino group and include norloline, loline, N-methylloline, N-acetylloline, N-acetylnorloline, and N-formylloline. The first committed step is the condensation of O-acetyl-L-homoserine (derived from L-aspartic acid) and L-proline, probably catalyzed by the gamma-type pyridoxal 5'-phosphate(PLP)-dependent enzyme lolC, to give the diamino diacid, NACPP. Ensuing cyclization, decarboxylation, and acetylation steps yield 1-exo-acetamidopyrrolizidine (AcAP). LolO is required for installation of the ether bridge upon the pathway intermediate, 1-exo-acetamidopyrrolizidine (AcAP). In sequential 2-oxoglutarate- and O(2)-consuming steps, lolO removes hydrogens from C2 and C7 of AcAP to form both carbon-oxygen bonds in N-acetylnorloline (NANL), the precursor to all other lolines. The enzymes lolD, lolE, lolF and lolT have also been proposed to be involved in the ether-bridge installation. Further processing of the exocyclic moiety of NANL by fungal N-acetamidase (LolN), methyltransferase (LolM), and cytochrome P450 (LolP) enzymes, with occasional involvement of a plant acetyltransferase, generates the other known lolines. LolN transforms NANL to norlonine which is monomethylated and dimethylated to respectively lonine and N-methyllonine (NML) by lolM. LolP catalyzes hydroxylation of the methyl group in N-methylloline (NML) and further oxygenation to N-formylloline (NFL). A plant acetyltransferase is responsible for the acetylation of loline to form N-acetylloline (NAL). LolA might interact with aspartate kinase to prevent feedback inhibition of its activity by these end products and thereby promote production of L-homoserine from L-aspartate. In Epichloe uncinata (Endophyte fungus), this protein is L-cysteine desulfhydrase-like protein lolT2.